The sequence spans 283 residues: Bifunctional protein FolD (283 aa).

NADP(+)-binding positions include 163–165 (GRS), Ser-188, and Ile-229.

This sequence belongs to the tetrahydrofolate dehydrogenase/cyclohydrolase family. In terms of assembly, homodimer.

It carries out the reaction (6R)-5,10-methylene-5,6,7,8-tetrahydrofolate + NADP(+) = (6R)-5,10-methenyltetrahydrofolate + NADPH. It catalyses the reaction (6R)-5,10-methenyltetrahydrofolate + H2O = (6R)-10-formyltetrahydrofolate + H(+). The protein operates within one-carbon metabolism; tetrahydrofolate interconversion. In terms of biological role, catalyzes the oxidation of 5,10-methylenetetrahydrofolate to 5,10-methenyltetrahydrofolate and then the hydrolysis of 5,10-methenyltetrahydrofolate to 10-formyltetrahydrofolate. This Latilactobacillus sakei subsp. sakei (strain 23K) (Lactobacillus sakei subsp. sakei) protein is Bifunctional protein FolD.